We begin with the raw amino-acid sequence, 132 residues long: NADH-quinone oxidoreductase subunit A (132 aa).

3 helical membrane-spanning segments follow: residues 14 to 34, 66 to 86, and 96 to 116; these read FFTFFFIAVSICVFMLSISWI, FYLVAIYFVLFDVEALYLYAW, and IGFIEALIFILFLLSGLIYLI.

It belongs to the complex I subunit 3 family. As to quaternary structure, NDH-1 is composed of 13 different subunits. Subunits NuoA, H, J, K, L, M, N constitute the membrane sector of the complex.

Its subcellular location is the cell membrane. The catalysed reaction is a quinone + NADH + 5 H(+)(in) = a quinol + NAD(+) + 4 H(+)(out). Functionally, NDH-1 shuttles electrons from NADH, via FMN and iron-sulfur (Fe-S) centers, to quinones in the respiratory chain. The immediate electron acceptor for the enzyme in this species is believed to be ubiquinone. Couples the redox reaction to proton translocation (for every two electrons transferred, four hydrogen ions are translocated across the cytoplasmic membrane), and thus conserves the redox energy in a proton gradient. In Buchnera aphidicola subsp. Baizongia pistaciae (strain Bp), this protein is NADH-quinone oxidoreductase subunit A.